The primary structure comprises 548 residues: Membrane protein insertase YidC (548 aa).

Residues 6–26 (NLLVIALLFVSFMIWQAWEQD) traverse the membrane as a helical segment. The interval 28–56 (NPQPQTQQTTQTTTTAAGSAADQGVPASG) is disordered. Over residues 29–42 (PQPQTQQTTQTTTT) the composition is skewed to low complexity. 4 helical membrane passes run 350 to 370 (FVGN…GIMY), 424 to 444 (FPLI…MGSI), 458 to 478 (LSAQ…MFFI), and 499 to 519 (PVIF…YYIV).

Belongs to the OXA1/ALB3/YidC family. Type 1 subfamily. As to quaternary structure, interacts with the Sec translocase complex via SecD. Specifically interacts with transmembrane segments of nascent integral membrane proteins during membrane integration.

It localises to the cell inner membrane. Functionally, required for the insertion and/or proper folding and/or complex formation of integral membrane proteins into the membrane. Involved in integration of membrane proteins that insert both dependently and independently of the Sec translocase complex, as well as at least some lipoproteins. Aids folding of multispanning membrane proteins. The protein is Membrane protein insertase YidC of Salmonella enteritidis PT4 (strain P125109).